Here is a 443-residue protein sequence, read N- to C-terminus: ATP-dependent protease ATPase subunit HslU (443 aa).

ATP-binding positions include I18 and 60-65 (GVGKTE). The interval 139–161 (ARDSGFDANPSEENNATRQKFRK) is disordered. ATP is bound by residues D256, E321, and R393.

It belongs to the ClpX chaperone family. HslU subfamily. In terms of assembly, a double ring-shaped homohexamer of HslV is capped on each side by a ring-shaped HslU homohexamer. The assembly of the HslU/HslV complex is dependent on binding of ATP.

Its subcellular location is the cytoplasm. Functionally, ATPase subunit of a proteasome-like degradation complex; this subunit has chaperone activity. The binding of ATP and its subsequent hydrolysis by HslU are essential for unfolding of protein substrates subsequently hydrolyzed by HslV. HslU recognizes the N-terminal part of its protein substrates and unfolds these before they are guided to HslV for hydrolysis. The sequence is that of ATP-dependent protease ATPase subunit HslU from Nitrosomonas eutropha (strain DSM 101675 / C91 / Nm57).